Here is a 751-residue protein sequence, read N- to C-terminus: Catalase-peroxidase 1 (751 aa).

Residues 1-11 are compositionally biased toward basic and acidic residues; that stretch reads MTDKQHTRSVS. The disordered stretch occupies residues 1 to 31; that stretch reads MTDKQHTRSVSESENPAIPSPTPKVSRPRRN. Residues 103-225 constitute a cross-link (tryptophyl-tyrosyl-methioninium (Trp-Tyr) (with M-251)); it reads WHAAGTYRIA…LANVQMGLIY (123 aa). His104 serves as the catalytic Proton acceptor. The segment at residues 225-251 is a cross-link (tryptophyl-tyrosyl-methioninium (Tyr-Met) (with W-103)); that stretch reads YVNPEGPGGNPDPLAAARDIRETFARM. His266 is a binding site for heme b. Residues 345–375 are disordered; it reads AGAKQWKPKNPEANDTVPDAHGASRRHSPTM.

It belongs to the peroxidase family. Peroxidase/catalase subfamily. In terms of assembly, homodimer or homotetramer. Heme b serves as cofactor. In terms of processing, formation of the three residue Trp-Tyr-Met cross-link is important for the catalase, but not the peroxidase activity of the enzyme.

The catalysed reaction is H2O2 + AH2 = A + 2 H2O. It catalyses the reaction 2 H2O2 = O2 + 2 H2O. In terms of biological role, bifunctional enzyme with both catalase and broad-spectrum peroxidase activity. This Cupriavidus pinatubonensis (strain JMP 134 / LMG 1197) (Cupriavidus necator (strain JMP 134)) protein is Catalase-peroxidase 1.